A 452-amino-acid chain; its full sequence is Glutathione gamma-glutamylcysteinyltransferase 2 (452 aa).

In terms of domain architecture, Peptidase C83 spans 1 to 220 (MSMASLYRRS…GFMLISRPHR (220 aa)). Residues 287 to 315 (EDVNQNLSSEEKSRLKLKQELLKQVQETK) adopt a coiled-coil conformation.

This sequence belongs to the phytochelatin synthase family. As to expression, expressed in shoots, roots, leaves, stems and flowers.

It catalyses the reaction [Glu(-Cys)](n)-Gly + glutathione + H(+) = [Glu(-Cys)](n+1)-Gly + glycine. Requires cadmium for activity. Also activated in heterologous system by AsO(4)(3-) ions, but not by Cu(2+), Zn(2+), Mn(2+) or Ni(2+) ions. Its function is as follows. Involved in the synthesis of phytochelatins (PC) and homophytochelatins (hPC), the heavy-metal-binding peptides of plants. This is Glutathione gamma-glutamylcysteinyltransferase 2 (PCS2) from Arabidopsis thaliana (Mouse-ear cress).